We begin with the raw amino-acid sequence, 31 residues long: Cytochrome b6-f complex subunit 6 (31 aa).

A helical membrane pass occupies residues 4 to 24 (ITSYFGFLLAALTITSALFIG).

This sequence belongs to the PetL family. As to quaternary structure, the 4 large subunits of the cytochrome b6-f complex are cytochrome b6, subunit IV (17 kDa polypeptide, PetD), cytochrome f and the Rieske protein, while the 4 small subunits are PetG, PetL, PetM and PetN. The complex functions as a dimer.

The protein resides in the plastid. The protein localises to the chloroplast thylakoid membrane. Its function is as follows. Component of the cytochrome b6-f complex, which mediates electron transfer between photosystem II (PSII) and photosystem I (PSI), cyclic electron flow around PSI, and state transitions. PetL is important for photoautotrophic growth as well as for electron transfer efficiency and stability of the cytochrome b6-f complex. The chain is Cytochrome b6-f complex subunit 6 from Coffea arabica (Arabian coffee).